We begin with the raw amino-acid sequence, 748 residues long: Probable transcriptional regulator SLK1 (748 aa).

Disordered regions lie at residues 67–93 and 138–163; these read QHLPQQQQQQLLQQQTGQGSVPMRENN and QQRLRQHQQMLQSMSPSQRLQLQQQQ. Positions 71–81 are enriched in low complexity; sequence QQQQQQLLQQQ. The dimerization stretch occupies residues 204 to 451; that stretch reads PAENCITYWR…EQKIGPIEGL (248 aa). The Nuclear localization signal signature appears at 213–227; the sequence is RKFVAEYFSPRAKQR. A compositionally biased stretch (polar residues) spans 572–587; it reads NAMNNPNSNTGKQEGF. Disordered stretches follow at residues 572–653 and 667–712; these read NAMN…GNTP and ENGG…NNSF. Over residues 588–606 the composition is skewed to low complexity; the sequence is SSQNPTPNSNQSPSSSSQQ. Positions 615 to 653 are enriched in polar residues; sequence FPNSPQMQQQQRTMNGPTNILPQNHPHQLQSPHSHGNTP. Residues 667–686 show a composition bias toward low complexity; that stretch reads ENGGSVQQQQAFSGQSGSNS. Positions 687–699 are enriched in polar residues; that stretch reads NAERNTTASTSNI.

This sequence belongs to the adn1/SEU family. In terms of assembly, forms corepressor complexes with LUH; LUH is the transcription repressor subunit and SLK1 the specific DNA-binding adapters. Expressed in young flower meristems, ovules and the carpel margin meristem.

It is found in the nucleus. In terms of biological role, probable transcription regulator that functions in the development of the carpel margin meristem similarly to SEUSS (SEU). In association with SEU, supports organ development from meristematic regions by facilitating auxin response and thus organ initiation, and by sustaining meristematic potential through the maintenance of PHABULOSA expression. DNA-binding adapter subunit of the SEU-SLK1 transcriptional corepressor of abiotic stress (e.g. salt and osmotic stress) response genes. This is Probable transcriptional regulator SLK1 (SLK1) from Arabidopsis thaliana (Mouse-ear cress).